A 148-amino-acid chain; its full sequence is 3-hydroxyacyl-[acyl-carrier-protein] dehydratase FabZ (148 aa).

His-48 is an active-site residue.

The protein belongs to the thioester dehydratase family. FabZ subfamily.

It localises to the cytoplasm. The catalysed reaction is a (3R)-hydroxyacyl-[ACP] = a (2E)-enoyl-[ACP] + H2O. In terms of biological role, involved in unsaturated fatty acids biosynthesis. Catalyzes the dehydration of short chain beta-hydroxyacyl-ACPs and long chain saturated and unsaturated beta-hydroxyacyl-ACPs. This chain is 3-hydroxyacyl-[acyl-carrier-protein] dehydratase FabZ, found in Campylobacter fetus subsp. fetus (strain 82-40).